We begin with the raw amino-acid sequence, 1940 residues long: Myosin-2 (1940 aa).

One can recognise a Myosin N-terminal SH3-like domain in the interval 33 to 82; it reads DAKTSVFVAEPKESFVKGTIQSREGGKVTVKTEGGATLTVKEDQVFPMNP. Thr64 and Thr69 each carry phosphothreonine. One can recognise a Myosin motor domain in the interval 86-783; the sequence is DKIEDMAMMT…LLGLLEEMRD (698 aa). At Lys130 the chain carries N6,N6,N6-trimethyllysine. Residue 179–186 participates in ATP binding; it reads GESGAGKT. Tyr389 bears the Phosphotyrosine mark. A Phosphoserine modification is found at Ser392. Position 419 is a phosphothreonine (Thr419). A Phosphoserine modification is found at Ser625. The actin-binding stretch occupies residues 660 to 682; that stretch reads LNKLMTNLRSTHPHFVRCIIPNE. His758 is subject to Pros-methylhistidine. The segment at 762 to 776 is actin-binding; that stretch reads KFGHTKVFFKAGLLG. Residues 786–815 form the IQ domain; that stretch reads LAQLMTRTQARCRGFLARVEYQKMVERRES. The stretch at 844–1940 forms a coiled coil; that stretch reads LLKSAETEKE…EVHTKIISEE (1097 aa). Phosphoserine occurs at positions 1093, 1097, 1163, and 1238. Phosphothreonine is present on Thr1242. Position 1244 is a phosphoserine (Ser1244). Phosphothreonine is present on residues Thr1256 and Thr1287. Residues Ser1289, Ser1293, Ser1304, and Ser1307 each carry the phosphoserine modification. Position 1465 is a phosphotyrosine (Tyr1465). Residue Thr1468 is modified to Phosphothreonine. Tyr1493 is modified (phosphotyrosine). Residue Ser1496 is modified to Phosphoserine. Thr1502 is modified (phosphothreonine). The residue at position 1515 (Ser1515) is a Phosphoserine. Residue Thr1518 is modified to Phosphothreonine. Ser1543, Ser1555, Ser1575, Ser1601, Ser1715, and Ser1727 each carry phosphoserine. Thr1731 and Thr1737 each carry phosphothreonine. The tract at residues 1886 to 1905 is disordered; the sequence is QAEEAEEQSNTNLSKFRKLQ.

This sequence belongs to the TRAFAC class myosin-kinesin ATPase superfamily. Myosin family. Muscle myosin is a hexameric protein that consists of 2 heavy chain subunits (MHC), 2 alkali light chain subunits (MLC) and 2 regulatory light chain subunits (MLC-2). Interacts with GCSAM.

It is found in the cytoplasm. The protein resides in the myofibril. Functionally, myosins are actin-based motor molecules with ATPase activity essential for muscle contraction. The protein is Myosin-2 (MYH2) of Bos taurus (Bovine).